A 247-amino-acid polypeptide reads, in one-letter code: ATP synthase subunit a, chloroplastic (247 aa).

Transmembrane regions (helical) follow at residues 38–58, 95–115, 134–154, 199–219, and 220–240; these read QVLITSWVVIAILLGSATLAV, VPFIGTMFLFIFVSNWSGALL, INTTVALALLTSVAYFYAGLT, LVVVVLVSLVPSVVPIPVMFL, and GLFTSGIQALIFATLAAAYIG.

The protein belongs to the ATPase A chain family. As to quaternary structure, F-type ATPases have 2 components, CF(1) - the catalytic core - and CF(0) - the membrane proton channel. CF(1) has five subunits: alpha(3), beta(3), gamma(1), delta(1), epsilon(1). CF(0) has four main subunits: a, b, b' and c.

The protein resides in the plastid. The protein localises to the chloroplast thylakoid membrane. Functionally, key component of the proton channel; it plays a direct role in the translocation of protons across the membrane. This Jasminum nudiflorum (Winter jasmine) protein is ATP synthase subunit a, chloroplastic.